The primary structure comprises 596 residues: ATP-dependent RNA helicase dbp3 (596 aa).

The span at 1 to 17 shows a compositional bias: basic and acidic residues; the sequence is MPKRTLEDTELNPRDNY. Disordered stretches follow at residues 1–87 and 115–139; these read MPKR…ESTS and EEKV…QNGT. The segment covering 21–30 has biased composition (basic residues); the sequence is SSKKSRKEKR. The stretch at 47–120 forms a coiled coil; it reads IDIEVESKEA…KEGKEEKVDI (74 aa). The segment covering 123–139 has biased composition (polar residues); that stretch reads STDSATPISVAPQQNGT. The Q motif signature appears at 180-207; it reads IKFDYLPITDSAQRAPFKDFKAPTPIQA. A Helicase ATP-binding domain is found at 210 to 386; sequence WPFLLAGRDV…STFMTSPVKI (177 aa). 223 to 230 lines the ATP pocket; the sequence is AETGSGKT. The DEAD box motif lies at 332 to 335; that stretch reads DEAD. The Helicase C-terminal domain occupies 417 to 566; sequence RLMQLLKQYQ…PVPDELLKFG (150 aa).

The protein belongs to the DEAD box helicase family. DDX5/DBP2 subfamily.

Its subcellular location is the nucleus. The protein resides in the nucleolus. The catalysed reaction is ATP + H2O = ADP + phosphate + H(+). Functionally, ATP-dependent RNA helicase required for 60S ribosomal subunit synthesis. Involved in efficient pre-rRNA processing, predominantly at site A3, which is necessary for the normal formation of 25S and 5.8S rRNAs. The sequence is that of ATP-dependent RNA helicase dbp3 (dbp3) from Sclerotinia sclerotiorum (strain ATCC 18683 / 1980 / Ss-1) (White mold).